The chain runs to 624 residues: Alpha-mannosidase I MNS4 (624 aa).

Residues 1-7 lie on the Cytoplasmic side of the membrane; that stretch reads MDSNFKW. The chain crosses the membrane as a helical; Signal-anchor for type II membrane protein span at residues 8 to 28; that stretch reads LLFAILISLTFSGFVLHHGVL. Topologically, residues 29 to 624 are lumenal; that stretch reads AESVKPDEAK…ETDDQRSYSS (596 aa). Residue Asn-115 is glycosylated (N-linked (GlcNAc...) asparagine). Catalysis depends on Glu-122, which acts as the Proton donor. Residue Asp-262 is part of the active site. The active-site Proton donor is the Glu-355. Glu-376 is an active-site residue. Thr-466 serves as a coordination point for Ca(2+). An N-linked (GlcNAc...) asparagine glycan is attached at Asn-494. The tract at residues 574 to 624 is disordered; it reads QTVEKRPQEEEGFTSQSEPIMTISGGSSNDQTGQELTLLESETDDQRSYSS. Positions 586 to 608 are enriched in polar residues; it reads FTSQSEPIMTISGGSSNDQTGQE.

It belongs to the glycosyl hydrolase 47 family. Ca(2+) is required as a cofactor.

The protein resides in the endoplasmic reticulum membrane. It participates in protein modification; protein glycosylation. Functionally, can convert Man(9)GlcNAc(2) and Man(8)GlcNAc(2) into N-glycans with a terminal alpha-1,6-linked Man residue in the C-branch. Functions in the formation of unique N-glycan structures that are specifically recognized by components of the endoplasmic reticulum-associated degradation (ERAD) machinery, which leads to the degradation of misfolded glycoproteins. Most likely generates N-glycan signal on misfolded glycoproteins that is subsequently recognized by OS9. Required for ERAD of the heavily glycosylated and misfolded BRI1 variants BRI1-5 and BRI1-9. Does not seem to play role in N-glycan processing of correctly folded proteins destined for secretion. The sequence is that of Alpha-mannosidase I MNS4 (MNS4) from Arabidopsis thaliana (Mouse-ear cress).